The primary structure comprises 327 residues: MQREKIVVIGAGAFGTALAVVIALENRHDVTLLGRDPSLMADLRNERVHEAALPGVELPDALGFSAEPDVLAGASIVLFAMPSQAHADAAQHYGPYLASDSIIVTCAKGIDRNSGRLLTELLETELPHHPIAVLSGPGFAADIARGLPTAMAIAAEDATVAERLATTISGKTFRLYASTDRIGVQLGGALKNVLAIAAGIVEGAGLGDSARAALISRGLAEMSRLIVAMGGKADTVRGLSGLGDLVLTATSHQSRNLRFGIALGRGEGKDMSGGLVEGAFAAAVAARLGEHHAIDMPVTEAVAAIIDGNLDVASAMQQLMTRPITTE.

Residues Phe-14, Arg-35, and Lys-108 each contribute to the NADPH site. Residues Lys-108 and Gly-136 each contribute to the sn-glycerol 3-phosphate site. Ala-140 is a binding site for NADPH. Residues Lys-191, Asp-244, Ser-254, Arg-255, and Asn-256 each contribute to the sn-glycerol 3-phosphate site. Lys-191 serves as the catalytic Proton acceptor. Arg-255 is a binding site for NADPH. Leu-275 and Glu-277 together coordinate NADPH.

This sequence belongs to the NAD-dependent glycerol-3-phosphate dehydrogenase family.

It localises to the cytoplasm. The enzyme catalyses sn-glycerol 3-phosphate + NAD(+) = dihydroxyacetone phosphate + NADH + H(+). It carries out the reaction sn-glycerol 3-phosphate + NADP(+) = dihydroxyacetone phosphate + NADPH + H(+). The protein operates within membrane lipid metabolism; glycerophospholipid metabolism. Functionally, catalyzes the reduction of the glycolytic intermediate dihydroxyacetone phosphate (DHAP) to sn-glycerol 3-phosphate (G3P), the key precursor for phospholipid synthesis. In Agrobacterium fabrum (strain C58 / ATCC 33970) (Agrobacterium tumefaciens (strain C58)), this protein is Glycerol-3-phosphate dehydrogenase [NAD(P)+].